Consider the following 380-residue polypeptide: Serpin B7 (380 aa).

Serine 217 carries the post-translational modification Phosphoserine.

Belongs to the serpin family. Ov-serpin subfamily.

Its subcellular location is the cytoplasm. Its function is as follows. Might function as an inhibitor of Lys-specific proteases. Might influence the maturation of megakaryocytes via its action as a serpin. The chain is Serpin B7 (Serpinb7) from Mus musculus (Mouse).